Reading from the N-terminus, the 105-residue chain is Flagellar transcriptional regulator FlhD (105 aa).

The protein belongs to the FlhD family. As to quaternary structure, homodimer; disulfide-linked. Forms a heterohexamer composed of two FlhC and four FlhD subunits. Each FlhC binds a FlhD dimer, forming a heterotrimer, and a hexamer assembles by dimerization of two heterotrimers.

The protein resides in the cytoplasm. Functions in complex with FlhC as a master transcriptional regulator that regulates transcription of several flagellar and non-flagellar operons by binding to their promoter region. Activates expression of class 2 flagellar genes, including fliA, which is a flagellum-specific sigma factor that turns on the class 3 genes. Also regulates genes whose products function in a variety of physiological pathways. The sequence is that of Flagellar transcriptional regulator FlhD from Ralstonia nicotianae (strain ATCC BAA-1114 / GMI1000) (Ralstonia solanacearum).